The following is a 239-amino-acid chain: Prolyl hydroxylase EGLN3 (239 aa).

Residues 62–73 are beta(2)beta(3) 'finger-like' loop; that stretch reads AGPRAGVSKRHL. The segment at 88–104 is required for interaction with ADRB2; the sequence is CEAISFLLSLIDRLVLY. The region spanning 116–214 is the Fe2OG dioxygenase domain; sequence ERSKAMVACY…RYAMTVWYFD (99 aa). Fe cation contacts are provided by histidine 135, aspartate 137, and histidine 196. Residue arginine 205 participates in 2-oxoglutarate binding.

As to quaternary structure, interacts with BCL2 (via its BH4 domain); the interaction disrupts the BAX-BCL4 complex inhibiting the anti-apoptotic activity of BCL2. Interacts with WDR83; the interaction leads to almost complete elimination of HIF-mediated reporter activity. Interacts with ADRB2; the interaction hydroxylates ADRB2 facilitating its ubiquitination by the VHL-E3 ligase complex. Interacts with PAX2; the interaction targets PAX2 for destruction. Interacts with PKM; the interaction hydroxylates PKM in hypoxia. Interacts with LIMD1, WTIP and AJUBA. It depends on Fe(2+) as a cofactor. L-ascorbate serves as cofactor. Ubiquitinated by SIAH1 and/or SIAH2 in response to the unfolded protein response (UPR), leading to its degradation. In terms of tissue distribution, widely expressed at low levels. Expressed at higher levels in adult heart (cardiac myocytes, aortic endothelial cells and coronary artery smooth muscle), lung and placenta, and in fetal spleen, heart and skeletal muscle. Also expressed in pancreas. Localized to pancreatic acini and islet cells.

Its subcellular location is the nucleus. It is found in the cytoplasm. The catalysed reaction is L-prolyl-[protein] + 2-oxoglutarate + O2 = trans-4-hydroxy-L-prolyl-[protein] + succinate + CO2. It carries out the reaction L-prolyl-[hypoxia-inducible factor alpha subunit] + 2-oxoglutarate + O2 = trans-4-hydroxy-L-prolyl-[hypoxia-inducible factor alpha subunit] + succinate + CO2. Activated in cardiovascular cells and Hela cells following exposure to hypoxia. Inhibited by polynitrogen compounds probably by chelation to Fe(2+) ions. Functionally, prolyl hydroxylase that mediates hydroxylation of proline residues in target proteins, such as PKM, TELO2, ATF4 and HIF1A. Target proteins are preferentially recognized via a LXXLAP motif. Cellular oxygen sensor that catalyzes, under normoxic conditions, the post-translational formation of 4-hydroxyproline in hypoxia-inducible factor (HIF) alpha proteins. Hydroxylates a specific proline found in each of the oxygen-dependent degradation (ODD) domains (N-terminal, NODD, and C-terminal, CODD) of HIF1A. Also hydroxylates HIF2A. Has a preference for the CODD site for both HIF1A and HIF2A. Hydroxylation on the NODD site by EGLN3 appears to require prior hydroxylation on the CODD site. Hydroxylated HIFs are then targeted for proteasomal degradation via the von Hippel-Lindau ubiquitination complex. Under hypoxic conditions, the hydroxylation reaction is attenuated allowing HIFs to escape degradation resulting in their translocation to the nucleus, heterodimerization with HIF1B, and increased expression of hypoxy-inducible genes. ELGN3 is the most important isozyme in limiting physiological activation of HIFs (particularly HIF2A) in hypoxia. Also hydroxylates PKM in hypoxia, limiting glycolysis. Under normoxia, hydroxylates and regulates the stability of ADRB2. Regulator of cardiomyocyte and neuronal apoptosis. In cardiomyocytes, inhibits the anti-apoptotic effect of BCL2 by disrupting the BAX-BCL2 complex. In neurons, has a NGF-induced proapoptotic effect, probably through regulating CASP3 activity. Also essential for hypoxic regulation of neutrophilic inflammation. Plays a crucial role in DNA damage response (DDR) by hydroxylating TELO2, promoting its interaction with ATR which is required for activation of the ATR/CHK1/p53 pathway. Also mediates hydroxylation of ATF4, leading to decreased protein stability of ATF4. This Homo sapiens (Human) protein is Prolyl hydroxylase EGLN3.